Consider the following 193-residue polypeptide: NAD(P)H-quinone oxidoreductase subunit J (193 aa).

The disordered stretch occupies residues 1–21 (MSDSAPTNPTPTNPAPEESAS).

It belongs to the complex I 30 kDa subunit family. NDH-1 can be composed of about 15 different subunits; different subcomplexes with different compositions have been identified which probably have different functions.

The protein resides in the cellular thylakoid membrane. The catalysed reaction is a plastoquinone + NADH + (n+1) H(+)(in) = a plastoquinol + NAD(+) + n H(+)(out). It catalyses the reaction a plastoquinone + NADPH + (n+1) H(+)(in) = a plastoquinol + NADP(+) + n H(+)(out). Functionally, NDH-1 shuttles electrons from an unknown electron donor, via FMN and iron-sulfur (Fe-S) centers, to quinones in the respiratory and/or the photosynthetic chain. The immediate electron acceptor for the enzyme in this species is believed to be plastoquinone. Couples the redox reaction to proton translocation, and thus conserves the redox energy in a proton gradient. Cyanobacterial NDH-1 also plays a role in inorganic carbon-concentration. The chain is NAD(P)H-quinone oxidoreductase subunit J from Synechococcus sp. (strain CC9902).